We begin with the raw amino-acid sequence, 243 residues long: 3-deoxy-manno-octulosonate cytidylyltransferase (243 aa).

The protein belongs to the KdsB family.

Its subcellular location is the cytoplasm. It carries out the reaction 3-deoxy-alpha-D-manno-oct-2-ulosonate + CTP = CMP-3-deoxy-beta-D-manno-octulosonate + diphosphate. It participates in nucleotide-sugar biosynthesis; CMP-3-deoxy-D-manno-octulosonate biosynthesis; CMP-3-deoxy-D-manno-octulosonate from 3-deoxy-D-manno-octulosonate and CTP: step 1/1. It functions in the pathway bacterial outer membrane biogenesis; lipopolysaccharide biosynthesis. In terms of biological role, activates KDO (a required 8-carbon sugar) for incorporation into bacterial lipopolysaccharide in Gram-negative bacteria. This chain is 3-deoxy-manno-octulosonate cytidylyltransferase, found in Helicobacter pylori (strain HPAG1).